The primary structure comprises 247 residues: Carboxy-S-adenosyl-L-methionine synthase (247 aa).

S-adenosyl-L-methionine-binding positions include Y39, 64-66, 117-118, N132, and R199; these read GCS and DI.

This sequence belongs to the class I-like SAM-binding methyltransferase superfamily. Cx-SAM synthase family. As to quaternary structure, homodimer.

The catalysed reaction is prephenate + S-adenosyl-L-methionine = carboxy-S-adenosyl-L-methionine + 3-phenylpyruvate + H2O. Functionally, catalyzes the conversion of S-adenosyl-L-methionine (SAM) to carboxy-S-adenosyl-L-methionine (Cx-SAM). In Aeromonas salmonicida (strain A449), this protein is Carboxy-S-adenosyl-L-methionine synthase.